Here is a 424-residue protein sequence, read N- to C-terminus: Tubby protein homolog 1 (424 aa).

The interval 19 to 47 (MLEDKQKQKRHQSAGSVRTTTTTSSMSMN) is disordered. The span at 37-47 (TTTTTSSMSMN) shows a compositional bias: low complexity.

Belongs to the TUB family. Interacts with rgb-3.

It is found in the cytoplasm. The protein resides in the cell projection. The protein localises to the axon. Its subcellular location is the dendrite. It localises to the cilium. In terms of biological role, has a role in fat regulation independent of daf-16. Implicated in ciliar sensory function which is required for normal sensory behavior such as chemotaxis. Functions in life span control via the insulin/IGF-1 pathway. Thought to be involved in neuronal trafficking. The polypeptide is Tubby protein homolog 1 (Caenorhabditis briggsae).